The primary structure comprises 265 residues: Putative 2-aminoethylphosphonate transport system permease protein PhnV (265 aa).

6 consecutive transmembrane segments (helical) span residues 13–33, 69–89, 104–124, 131–151, 185–205, and 233–253; these read GVVASVLFIVFFFLPLAVILM, LTIGFCASLFALLCGVWAALA, VFYLPSAIPSVSVGLGILVAF, MNGTLWIVLTAHFVLISAFTF, LPLLMPWMMSALALSLSLSMG, and NIADGAALTIVLVAITLLLMM. The region spanning 65-253 is the ABC transmembrane type-1 domain; sequence LLASLTIGFC…LVAITLLLMM (189 aa).

Belongs to the binding-protein-dependent transport system permease family.

It localises to the cell inner membrane. In terms of biological role, probably part of the PhnSTUV complex (TC 3.A.1.11.5) involved in 2-aminoethylphosphonate import. Probably responsible for the translocation of the substrate across the membrane. In Salmonella choleraesuis (strain SC-B67), this protein is Putative 2-aminoethylphosphonate transport system permease protein PhnV (phnV).